Consider the following 306-residue polypeptide: Glutaminase (306 aa).

Positions 66, 116, 159, 166, 190, 242, and 260 each coordinate substrate.

Belongs to the glutaminase family. In terms of assembly, homotetramer.

It carries out the reaction L-glutamine + H2O = L-glutamate + NH4(+). This chain is Glutaminase, found in Caulobacter vibrioides (strain ATCC 19089 / CIP 103742 / CB 15) (Caulobacter crescentus).